Here is a 296-residue protein sequence, read N- to C-terminus: Protoheme IX farnesyltransferase 2 (296 aa).

The next 9 helical transmembrane spans lie at 7-27 (LLVAKPGIIFGNLIAVAGGYF), 36-56 (PMLLLATVIGLSLVVASGCVL), 83-103 (LKAALAHGLVLGVAGFGLLWW), 108-128 (LTTALAGFGYFVYVGLYSLWF), 134-154 (YGTLVGSLSGAMPPVVGYCAV), 163-183 (ASLLAIFCLWQMPHSYAIAIF), 207-227 (IHIVLYILAFMAATLALCLGG), 229-249 (AGYGYLLVAVAVSLWWLAIAL), and 265-285 (FAFSIVAITALSVMMSIDFQV).

This sequence belongs to the UbiA prenyltransferase family. Protoheme IX farnesyltransferase subfamily.

It localises to the cell inner membrane. It carries out the reaction heme b + (2E,6E)-farnesyl diphosphate + H2O = Fe(II)-heme o + diphosphate. It functions in the pathway porphyrin-containing compound metabolism; heme O biosynthesis; heme O from protoheme: step 1/1. Converts heme B (protoheme IX) to heme O by substitution of the vinyl group on carbon 2 of heme B porphyrin ring with a hydroxyethyl farnesyl side group. This is Protoheme IX farnesyltransferase 2 from Pseudomonas aeruginosa (strain UCBPP-PA14).